The primary structure comprises 275 residues: MLQRSVFFLSDRTGITAETLGHSLLTQFDGIEWKKHYASFLDSAAKVQEIIDRINTIAKQEGQPSLVFSTLLDPVILASVRQADCYLIDFFESCLGVLETALQQSPVRIPGRSHILGQDASYFRRIAAIQYALNSDDGSNSKILADADVILVGVSRSGKTPVCVYLALQYGVLAANYPFTPEDMGVVRLPSLLQPLREKLFGLTLSTSRLQAVRVERYPGSHYASFVECQRELQWQNELYQQFNIPFIDTTGVSIEEISASIINRMRLERRLYGT.

ADP is bound at residue 153 to 160 (GVSRSGKT).

Belongs to the pyruvate, phosphate/water dikinase regulatory protein family. PSRP subfamily.

It catalyses the reaction [pyruvate, water dikinase] + ADP = [pyruvate, water dikinase]-phosphate + AMP + H(+). The catalysed reaction is [pyruvate, water dikinase]-phosphate + phosphate + H(+) = [pyruvate, water dikinase] + diphosphate. Functionally, bifunctional serine/threonine kinase and phosphorylase involved in the regulation of the phosphoenolpyruvate synthase (PEPS) by catalyzing its phosphorylation/dephosphorylation. The sequence is that of Putative phosphoenolpyruvate synthase regulatory protein from Nitrosomonas eutropha (strain DSM 101675 / C91 / Nm57).